We begin with the raw amino-acid sequence, 417 residues long: Transmembrane protease serine 11G (417 aa).

At 1–22 (MYQPGILGRRKRVCKPWTVALT) the chain is on the cytoplasmic side. A helical; Signal-anchor for type II membrane protein transmembrane segment spans residues 23–43 (TTAALLALAVLIGLLVYFLVY). Residues 44–417 (EEKTHYYQAS…RNWIKSKTNI (374 aa)) lie on the Extracellular side of the membrane. One can recognise an SEA domain in the interval 46–165 (KTHYYQASFW…PYLREMNAAQ (120 aa)). The region spanning 186–416 (IADGKPAGSN…YRNWIKSKTN (231 aa)) is the Peptidase S1 domain. A disulfide bridge connects residues Cys-211 and Cys-227. Active-site charge relay system residues include His-226 and Asp-271. Cystine bridges form between Cys-336–Cys-352 and Cys-363–Cys-392. Residue Ser-367 is the Charge relay system of the active site.

It belongs to the peptidase S1 family. In terms of tissue distribution, highest expression in lung and tongue. Also expressed in brain, colon, heart and liver. Isoform 1 is the predominant form in tongue whereas both isoforms are expressed in similar amounts in lung. At the cellular level, expression is confined to epithelial cells within the cleft of the circumvallate papillae extending into the ducts of the minor salivary glands, the respiratory epithelium of the nasal cavity and tear gland ducts.

It localises to the membrane. This Rattus norvegicus (Rat) protein is Transmembrane protease serine 11G (Tmprss11g).